The sequence spans 158 residues: Eukaryotic translation initiation factor 5A-3 (158 aa).

Residues 1-10 (MSDDEHHFES) show a composition bias toward basic and acidic residues. The disordered stretch occupies residues 1–23 (MSDDEHHFESSDAGASKTYPQQA). Residue Ser2 is modified to Phosphoserine. At Lys51 the chain carries Hypusine.

The protein belongs to the eIF-5A family. Post-translationally, lys-52 undergoes hypusination, a unique post-translational modification that consists in the addition of a butylamino group from spermidine to lysine side chain, leading to the formation of the unusual amino acid hypusine. eIF-5As are the only known proteins to undergo this modification, which is essential for their function. In terms of tissue distribution, expressed in the vascular tissues of roots, stems and leaves. Localized in phloem companion cells rather than sieve-tube members. Not expressed in xylem or procambium. Detected in root tips and in the chalazal tissue of fertilized ovules.

In terms of biological role, translation factor that promotes translation elongation and termination, particularly upon ribosome stalling at specific amino acid sequence contexts. Binds between the exit (E) and peptidyl (P) site of the ribosome and promotes rescue of stalled ribosome: specifically required for efficient translation of polyproline-containing peptides as well as other motifs that stall the ribosome. Acts as a ribosome quality control (RQC) cofactor by joining the RQC complex to facilitate peptidyl transfer during CAT tailing step. Involved in supporting growth and plays a regulatory role in the response to sub-lethal osmotic and nutrient stress. In Arabidopsis thaliana (Mouse-ear cress), this protein is Eukaryotic translation initiation factor 5A-3 (ELF5A-3).